We begin with the raw amino-acid sequence, 141 residues long: Large ribosomal subunit protein uL11 (141 aa).

It belongs to the universal ribosomal protein uL11 family. In terms of assembly, part of the ribosomal stalk of the 50S ribosomal subunit. Interacts with L10 and the large rRNA to form the base of the stalk. L10 forms an elongated spine to which L12 dimers bind in a sequential fashion forming a multimeric L10(L12)X complex. One or more lysine residues are methylated.

Functionally, forms part of the ribosomal stalk which helps the ribosome interact with GTP-bound translation factors. The sequence is that of Large ribosomal subunit protein uL11 from Parasynechococcus marenigrum (strain WH8102).